The sequence spans 434 residues: Glutamate-1-semialdehyde 2,1-aminomutase (434 aa).

At Lys266 the chain carries N6-(pyridoxal phosphate)lysine.

Belongs to the class-III pyridoxal-phosphate-dependent aminotransferase family. HemL subfamily. As to quaternary structure, homodimer. The cofactor is pyridoxal 5'-phosphate.

The protein resides in the cytoplasm. It catalyses the reaction (S)-4-amino-5-oxopentanoate = 5-aminolevulinate. It participates in porphyrin-containing compound metabolism; protoporphyrin-IX biosynthesis; 5-aminolevulinate from L-glutamyl-tRNA(Glu): step 2/2. This chain is Glutamate-1-semialdehyde 2,1-aminomutase, found in Psychrobacter sp. (strain PRwf-1).